A 481-amino-acid polypeptide reads, in one-letter code: Cobyric acid synthase (481 aa).

The 188-residue stretch at 248-435 (ALTVAWLAFS…LHGMFGSDRF (188 aa)) folds into the GATase cobBQ-type domain. The active-site Nucleophile is cysteine 330. Histidine 427 is an active-site residue.

Belongs to the CobB/CobQ family. CobQ subfamily.

The protein operates within cofactor biosynthesis; adenosylcobalamin biosynthesis. Catalyzes amidations at positions B, D, E, and G on adenosylcobyrinic A,C-diamide. NH(2) groups are provided by glutamine, and one molecule of ATP is hydrogenolyzed for each amidation. This chain is Cobyric acid synthase, found in Cereibacter sphaeroides (strain ATCC 17025 / ATH 2.4.3) (Rhodobacter sphaeroides).